The sequence spans 111 residues: Large ribosomal subunit protein uL24 (111 aa).

Belongs to the universal ribosomal protein uL24 family. As to quaternary structure, part of the 50S ribosomal subunit.

Its function is as follows. One of two assembly initiator proteins, it binds directly to the 5'-end of the 23S rRNA, where it nucleates assembly of the 50S subunit. One of the proteins that surrounds the polypeptide exit tunnel on the outside of the subunit. The chain is Large ribosomal subunit protein uL24 from Chlamydia pneumoniae (Chlamydophila pneumoniae).